Here is a 282-residue protein sequence, read N- to C-terminus: 2-dehydro-3-deoxyphosphooctonate aldolase (282 aa).

Belongs to the KdsA family.

It localises to the cytoplasm. It catalyses the reaction D-arabinose 5-phosphate + phosphoenolpyruvate + H2O = 3-deoxy-alpha-D-manno-2-octulosonate-8-phosphate + phosphate. Its pathway is carbohydrate biosynthesis; 3-deoxy-D-manno-octulosonate biosynthesis; 3-deoxy-D-manno-octulosonate from D-ribulose 5-phosphate: step 2/3. It functions in the pathway bacterial outer membrane biogenesis; lipopolysaccharide biosynthesis. In Shewanella halifaxensis (strain HAW-EB4), this protein is 2-dehydro-3-deoxyphosphooctonate aldolase.